The following is a 468-amino-acid chain: Probable 1,4-beta-D-glucan cellobiohydrolase C (468 aa).

A signal peptide spans 1 to 18 (MGRVSSLALALLLPAVQA). The region spanning 19-54 (QQTLWGQCGGIGWTGPTNCVAGAACSTQNPYYAQCL) is the CBM1 domain. 2 cysteine pairs are disulfide-bonded: Cys-26–Cys-43 and Cys-37–Cys-53. Residues 57–106 (TATTSTTLTTTTRVTTTTTSTTSKSSSTGSTTTTKSTGTTTTSGSSTTIT) form a thr-rich linker region. The disordered stretch occupies residues 68 to 107 (TRVTTTTTSTTSKSSSTGSTTTTKSTGTTTTSGSSTTITS). A catalytic region spans residues 107–468 (SAPSGNPFSG…QLLKNANPAF (362 aa)). Residue Asp-198 is part of the active site. Disulfide bonds link Cys-199-Cys-258 and Cys-390-Cys-437. Residue Asp-244 is the Proton donor of the active site. The active-site Nucleophile is the Asp-423.

The protein belongs to the glycosyl hydrolase 6 (cellulase B) family.

The protein localises to the secreted. It carries out the reaction Hydrolysis of (1-&gt;4)-beta-D-glucosidic linkages in cellulose and cellotetraose, releasing cellobiose from the non-reducing ends of the chains.. Its function is as follows. The biological conversion of cellulose to glucose generally requires three types of hydrolytic enzymes: (1) Endoglucanases which cut internal beta-1,4-glucosidic bonds; (2) Exocellobiohydrolases that cut the disaccharide cellobiose from the non-reducing end of the cellulose polymer chain; (3) Beta-1,4-glucosidases which hydrolyze the cellobiose and other short cello-oligosaccharides to glucose. This is Probable 1,4-beta-D-glucan cellobiohydrolase C (cbhC) from Aspergillus terreus (strain NIH 2624 / FGSC A1156).